Here is a 511-residue protein sequence, read N- to C-terminus: Bifunctional purine biosynthesis protein PurH (511 aa).

An MGS-like domain is found at 1–146 (MGRLALISVT…KNFAHLTVIS (146 aa)).

The protein belongs to the PurH family.

The catalysed reaction is (6R)-10-formyltetrahydrofolate + 5-amino-1-(5-phospho-beta-D-ribosyl)imidazole-4-carboxamide = 5-formamido-1-(5-phospho-D-ribosyl)imidazole-4-carboxamide + (6S)-5,6,7,8-tetrahydrofolate. It carries out the reaction IMP + H2O = 5-formamido-1-(5-phospho-D-ribosyl)imidazole-4-carboxamide. The protein operates within purine metabolism; IMP biosynthesis via de novo pathway; 5-formamido-1-(5-phospho-D-ribosyl)imidazole-4-carboxamide from 5-amino-1-(5-phospho-D-ribosyl)imidazole-4-carboxamide (10-formyl THF route): step 1/1. Its pathway is purine metabolism; IMP biosynthesis via de novo pathway; IMP from 5-formamido-1-(5-phospho-D-ribosyl)imidazole-4-carboxamide: step 1/1. In Microcystis aeruginosa (strain NIES-843 / IAM M-2473), this protein is Bifunctional purine biosynthesis protein PurH.